Reading from the N-terminus, the 365-residue chain is Putative ankyrin repeat protein R903 (365 aa).

10 ANK repeats span residues 38–67, 68–97, 99–127, 129–158, 184–213, 214–243, 245–273, 275–298, 299–328, and 330–361; these read NINS…DIRF, QNNE…DIFI, NNFC…KFSN, SKPI…NINK, KFKD…GNIT, VSNN…RFPR, SNEL…SIVD, LLNI…LKNV, NLQK…NPDE, and RTYL…KLQS.

The sequence is that of Putative ankyrin repeat protein R903 from Acanthamoeba polyphaga mimivirus (APMV).